Here is a 166-residue protein sequence, read N- to C-terminus: Putative signal peptidase complex catalytic subunit SEC11B (166 aa).

Residues 1 to 6 (MNKWRL) lie on the Cytoplasmic side of the membrane. Residues 7–24 (YYQVLNFGMIVSSALMIW) form a helical; Signal-anchor for type II membrane protein membrane-spanning segment. Topologically, residues 25-166 (KGLMVITGSE…LGLFVLVHRE (142 aa)) are extracellular. Residue serine 43 is part of the active site.

This sequence belongs to the peptidase S26B family.

The protein localises to the membrane. It carries out the reaction Cleavage of hydrophobic, N-terminal signal or leader sequences from secreted and periplasmic proteins.. Functionally, putative component of some signal peptidase complex which removes signal peptides from nascent proteins as they are translocated into the lumen of the endoplasmic reticulum. This Homo sapiens (Human) protein is Putative signal peptidase complex catalytic subunit SEC11B (SEC11B).